The following is a 212-amino-acid chain: MAIDKTKNQHRINEAIRVKEVRLVGDNVEQGVYNIQEARRIAESQDLDLVEISPNADPPVCRVTDYQKFVYQLKKKAKEQKAKSVKIVIKEIRFGPQTDDHDYNFKLKHAKEFLQEGSKVKAYVFFRGRSILFKEQGEVLLLRFANDLEDFARVEQMPILEGKRMTIMLTPKSASKKGHTPPKTQVEASKQANESAETEEEKKRCHPTKPVL.

Positions 171–212 (PKSASKKGHTPPKTQVEASKQANESAETEEEKKRCHPTKPVL) are disordered. Positions 182 to 195 (PKTQVEASKQANES) are enriched in polar residues.

Belongs to the IF-3 family. In terms of assembly, monomer.

The protein localises to the cytoplasm. Functionally, IF-3 binds to the 30S ribosomal subunit and shifts the equilibrium between 70S ribosomes and their 50S and 30S subunits in favor of the free subunits, thus enhancing the availability of 30S subunits on which protein synthesis initiation begins. This is Translation initiation factor IF-3 from Porphyromonas gingivalis (strain ATCC 33277 / DSM 20709 / CIP 103683 / JCM 12257 / NCTC 11834 / 2561).